Consider the following 40-residue polypeptide: Photosystem II reaction center protein J (40 aa).

A helical membrane pass occupies residues 8 to 28 (IPLWIIGTVAGILVIGLIGIF).

Belongs to the PsbJ family. In terms of assembly, PSII is composed of 1 copy each of membrane proteins PsbA, PsbB, PsbC, PsbD, PsbE, PsbF, PsbH, PsbI, PsbJ, PsbK, PsbL, PsbM, PsbT, PsbX, PsbY, PsbZ, Psb30/Ycf12, at least 3 peripheral proteins of the oxygen-evolving complex and a large number of cofactors. It forms dimeric complexes.

The protein localises to the plastid. It is found in the chloroplast thylakoid membrane. Functionally, one of the components of the core complex of photosystem II (PSII). PSII is a light-driven water:plastoquinone oxidoreductase that uses light energy to abstract electrons from H(2)O, generating O(2) and a proton gradient subsequently used for ATP formation. It consists of a core antenna complex that captures photons, and an electron transfer chain that converts photonic excitation into a charge separation. This is Photosystem II reaction center protein J from Oenothera elata subsp. hookeri (Hooker's evening primrose).